Consider the following 455-residue polypeptide: MKTTKILLHTGVLALSLLATQVMAAVSADEAAKLGTSLTPLGAEKAGNADGSIPAWDGGLATNAGSVDSRGFLANPYASEQPLFTITAQNVDQYKDKLTPGQLAMFKRYPDTYKIPVYKTHRSATVPAAVQEAAKRNATTTKLVEGGNGLENFDTANPFPIPQNGLEVIWNHITRYRGGSVRRLVTQATPQVNGSYQLVYFQDAFTFRTNLKDYNPNKPSNVLFYFKQRVTAPSRLAGNVLLVHETLNQVKEPRLAWLYNAGQRRVRRAPQVSYDGPGTAADGLRTSDNFDMYNGAPDRYDWKLEGKKEIYIPYNSYKLDDPKIKYSEIVKAGHINQDLTRYELHRVWHVVATLKPGERHIYAKRDFYIDEDTWQAAEIDHYDGRGTLWRVAEAHAEQYYDKQVPWYAVETLYDLLSGRYLALGMKNEEKQAYDFNYSASESDYTPAALRQEGVR.

An N-terminal signal peptide occupies residues 1–24; it reads MKTTKILLHTGVLALSLLATQVMA.

This is an uncharacterized protein from Pseudomonas aeruginosa (strain ATCC 15692 / DSM 22644 / CIP 104116 / JCM 14847 / LMG 12228 / 1C / PRS 101 / PAO1).